Consider the following 266-residue polypeptide: tRNA pseudouridine synthase A (266 aa).

The active-site Nucleophile is the Asp51. Tyr106 contacts substrate.

It belongs to the tRNA pseudouridine synthase TruA family.

It catalyses the reaction uridine(38/39/40) in tRNA = pseudouridine(38/39/40) in tRNA. Formation of pseudouridine at positions 38, 39 and 40 in the anticodon stem and loop of transfer RNAs. This is tRNA pseudouridine synthase A from Pyrococcus furiosus (strain ATCC 43587 / DSM 3638 / JCM 8422 / Vc1).